The primary structure comprises 88 residues: RNA-binding protein Hfq (88 aa).

The region spanning 9–68 (DPFLNALRCERIPVSIYLVNGIKLQGQIESFDQFVILLKNTVNQMVYKHAISTVVPARAV) is the Sm domain. A disordered region spans residues 66–88 (RAVSHHTASDRPQGERPQETTEE). Over residues 72–88 (TASDRPQGERPQETTEE) the composition is skewed to basic and acidic residues.

It belongs to the Hfq family. In terms of assembly, homohexamer.

RNA chaperone that binds small regulatory RNA (sRNAs) and mRNAs to facilitate mRNA translational regulation in response to envelope stress, environmental stress and changes in metabolite concentrations. Also binds with high specificity to tRNAs. The sequence is that of RNA-binding protein Hfq from Aliivibrio salmonicida (strain LFI1238) (Vibrio salmonicida (strain LFI1238)).